Reading from the N-terminus, the 429-residue chain is Ribosomal RNA small subunit methyltransferase B (429 aa).

Residues 254 to 260 (CAAPGGK), Asp-277, Asp-303, and Asp-322 each bind S-adenosyl-L-methionine. The Nucleophile role is filled by Cys-375.

The protein belongs to the class I-like SAM-binding methyltransferase superfamily. RsmB/NOP family.

The protein localises to the cytoplasm. The catalysed reaction is cytidine(967) in 16S rRNA + S-adenosyl-L-methionine = 5-methylcytidine(967) in 16S rRNA + S-adenosyl-L-homocysteine + H(+). Functionally, specifically methylates the cytosine at position 967 (m5C967) of 16S rRNA. The protein is Ribosomal RNA small subunit methyltransferase B of Shigella boydii serotype 4 (strain Sb227).